The following is a 25-amino-acid chain: Tubulin alpha chain (25 aa).

A GTP-binding site is contributed by glutamine 11.

The protein belongs to the tubulin family. As to quaternary structure, dimer of alpha and beta chains. A typical microtubule is a hollow water-filled tube with an outer diameter of 25 nm and an inner diameter of 15 nM. Alpha-beta heterodimers associate head-to-tail to form protofilaments running lengthwise along the microtubule wall with the beta-tubulin subunit facing the microtubule plus end conferring a structural polarity. Microtubules usually have 13 protofilaments but different protofilament numbers can be found in some organisms and specialized cells. Requires Mg(2+) as cofactor.

It is found in the cytoplasm. It localises to the cytoskeleton. It catalyses the reaction GTP + H2O = GDP + phosphate + H(+). In terms of biological role, tubulin is the major constituent of microtubules, a cylinder consisting of laterally associated linear protofilaments composed of alpha- and beta-tubulin heterodimers. Microtubules grow by the addition of GTP-tubulin dimers to the microtubule end, where a stabilizing cap forms. Below the cap, tubulin dimers are in GDP-bound state, owing to GTPase activity of alpha-tubulin. The polypeptide is Tubulin alpha chain (Leptomonas seymouri).